The chain runs to 617 residues: Type IV inositol polyphosphate 5-phosphatase 6 (617 aa).

Disordered stretches follow at residues 30 to 62 and 241 to 330; these read EFQA…KNTK and DFDP…VLYS. The segment covering 242–253 has biased composition (low complexity); that stretch reads FDPSFRGSSSSH. Residues 254–290 are compositionally biased toward basic and acidic residues; sequence RPSDYSRRPSDYSRRPSDYSRRPSDYSRRPSDSRPSD. Residues 291–311 are compositionally biased toward low complexity; sequence YSRPSDYYSRPSDYSRPSDFS. 2 catalytic regions span residues 458 to 473 and 538 to 553; these read DRVI…IALS and KRRT…WFGE.

This sequence belongs to the inositol polyphosphate 5-phosphatase family. In terms of tissue distribution, broadly expressed in emerging organs. Mostly localized in procambium of growing organs. Restricted to vascular differentiating cells of young organs.

It catalyses the reaction a 1,2-diacyl-sn-glycero-3-phospho-(1D-myo-inositol-4,5-bisphosphate) + H2O = a 1,2-diacyl-sn-glycero-3-phospho-(1D-myo-inositol 4-phosphate) + phosphate. The catalysed reaction is a 1,2-diacyl-sn-glycero-3-phospho-(1D-myo-inositol-3,4,5-trisphosphate) + H2O = a 1,2-diacyl-sn-glycero-3-phospho-(1D-myo-inositol-3,4-bisphosphate) + phosphate. Functionally, has phosphatase activity toward PtdIns(4,5)P2 and PtdIns(3,4,5)P3. Required for the patterning of procambium and during the differentiation of vascular tissues. Acts before the acquisition of preprocambial identity. Seems to be also involved in the abscisic acid (ABA) signaling pathway. Acts redundantly with CVL1 for maintaining vascular continuity. Regulates phosphoinositide-dependent VAN3 localization. In Arabidopsis thaliana (Mouse-ear cress), this protein is Type IV inositol polyphosphate 5-phosphatase 6.